Reading from the N-terminus, the 689-residue chain is DNA ligase (689 aa).

NAD(+) is bound by residues 40-44 (DAEYD), 89-90 (SL), and Glu121. Lys123 (N6-AMP-lysine intermediate) is an active-site residue. Arg144, Glu179, Lys295, and Lys319 together coordinate NAD(+). Residues Cys413, Cys416, Cys431, and Cys437 each contribute to the Zn(2+) site. A BRCT domain is found at 610-689 (KEHSSLTGKI…EEWLTIVNNV (80 aa)).

It belongs to the NAD-dependent DNA ligase family. LigA subfamily. It depends on Mg(2+) as a cofactor. The cofactor is Mn(2+).

The enzyme catalyses NAD(+) + (deoxyribonucleotide)n-3'-hydroxyl + 5'-phospho-(deoxyribonucleotide)m = (deoxyribonucleotide)n+m + AMP + beta-nicotinamide D-nucleotide.. Its function is as follows. DNA ligase that catalyzes the formation of phosphodiester linkages between 5'-phosphoryl and 3'-hydroxyl groups in double-stranded DNA using NAD as a coenzyme and as the energy source for the reaction. It is essential for DNA replication and repair of damaged DNA. This chain is DNA ligase, found in Rickettsia canadensis (strain McKiel).